The primary structure comprises 374 residues: F-box/LRR-repeat protein 8 (374 aa).

The 47-residue stretch at 2–48 (AEPGEGLPEEVLALIFRHLSLRDRAAAARVCRAWAAAATCSAVWHDT) folds into the F-box domain.

In terms of assembly, directly interacts with SKP1 and CUL1.

Functionally, substrate-recognition component of the SCF (SKP1-CUL1-F-box protein)-type E3 ubiquitin ligase complex. The polypeptide is F-box/LRR-repeat protein 8 (FBXL8) (Homo sapiens (Human)).